The chain runs to 437 residues: Putative metabolite transport protein NicT (437 aa).

A run of 12 helical transmembrane segments spans residues 28–48 (LIPFLCFCYLAAYLDRINVGF), 66–86 (LGAGLFFVGYIIFEVPSNLIL), 93–113 (LWIARIMITWGLLSACTMFVT), 123–143 (FLLGAAEAGFLPGVLYYLTMW), 152–172 (IIALFMIGLPLSSVIGGPISG), 189–209 (WLFLLEAIPSVLLGILTFWAL), 254–274 (VWMLGGIDFSILLSAYAMGFW), 290–310 (IGLLTAIPSLAALAGMLMIGA), 320–340 (WHIIVPFIIGAIAMASSTLFS), 347–367 (VVLFAIASAAIIGAVPVFFSL), 374–394 (GTAAATGFALACSVANIAGLV), and 411–431 (AALWVFAGCLILSCFLVIALP).

Belongs to the major facilitator superfamily.

The protein resides in the membrane. Its function is as follows. Probable transporter, possibly involved in the aerobic nicotinate degradation pathway. The sequence is that of Putative metabolite transport protein NicT (nicT) from Pseudomonas putida (strain ATCC 47054 / DSM 6125 / CFBP 8728 / NCIMB 11950 / KT2440).